Reading from the N-terminus, the 198-residue chain is MASQPPQEPTPTATSTPSTSALASLPPHLDPTTYPRTLTSPTHNIHLELTYSPLNPSQALTHTSSPAAGANVLFLGTTRDTFEGRAVSQLSYTCYPPLALKTLLDIATKAAEKFRLEGVYIAHRLGVVPIQESSIVVAVSAGHRGMAWRAGEEVLEEVKARLEVWKREEFVDGGMEWRENRERDAEGKVVAEKQEERE.

Residues 1–27 (MASQPPQEPTPTATSTPSTSALASLPP) are compositionally biased toward low complexity. Residues 1-40 (MASQPPQEPTPTATSTPSTSALASLPPHLDPTTYPRTLTS) are disordered. Residues 143-144 (HR), Lys159, and 166-168 (KRE) contribute to the substrate site. The interval 176-198 (EWRENRERDAEGKVVAEKQEERE) is disordered.

This sequence belongs to the MoaE family. MOCS2B subfamily. Heterotetramer; composed of 2 small (MOCS2A) and 2 large (MOCS2B) subunits.

It localises to the cytoplasm. The enzyme catalyses 2 [molybdopterin-synthase sulfur-carrier protein]-C-terminal-Gly-aminoethanethioate + cyclic pyranopterin phosphate + H2O = molybdopterin + 2 [molybdopterin-synthase sulfur-carrier protein]-C-terminal Gly-Gly + 2 H(+). The protein operates within cofactor biosynthesis; molybdopterin biosynthesis. In terms of biological role, catalytic subunit of the molybdopterin synthase complex, a complex that catalyzes the conversion of precursor Z into molybdopterin. Acts by mediating the incorporation of 2 sulfur atoms from thiocarboxylated MOCS2A into precursor Z to generate a dithiolene group. The protein is Molybdopterin synthase catalytic subunit of Aspergillus clavatus (strain ATCC 1007 / CBS 513.65 / DSM 816 / NCTC 3887 / NRRL 1 / QM 1276 / 107).